The chain runs to 452 residues: Trigger factor (452 aa).

Residues 170–256 (NSIVKVDFVE…IKSIKKRDLP (87 aa)) form the PPIase FKBP-type domain.

It belongs to the FKBP-type PPIase family. Tig subfamily.

It localises to the cytoplasm. The enzyme catalyses [protein]-peptidylproline (omega=180) = [protein]-peptidylproline (omega=0). Involved in protein export. Acts as a chaperone by maintaining the newly synthesized protein in an open conformation. Functions as a peptidyl-prolyl cis-trans isomerase. In Borrelia garinii subsp. bavariensis (strain ATCC BAA-2496 / DSM 23469 / PBi) (Borreliella bavariensis), this protein is Trigger factor.